We begin with the raw amino-acid sequence, 273 residues long: 2-dehydro-3-deoxyphosphooctonate aldolase (273 aa).

The protein belongs to the KdsA family.

The protein resides in the cytoplasm. It carries out the reaction D-arabinose 5-phosphate + phosphoenolpyruvate + H2O = 3-deoxy-alpha-D-manno-2-octulosonate-8-phosphate + phosphate. Its pathway is carbohydrate biosynthesis; 3-deoxy-D-manno-octulosonate biosynthesis; 3-deoxy-D-manno-octulosonate from D-ribulose 5-phosphate: step 2/3. It participates in bacterial outer membrane biogenesis; lipopolysaccharide biosynthesis. The polypeptide is 2-dehydro-3-deoxyphosphooctonate aldolase (Nitratidesulfovibrio vulgaris (strain ATCC 29579 / DSM 644 / CCUG 34227 / NCIMB 8303 / VKM B-1760 / Hildenborough) (Desulfovibrio vulgaris)).